Consider the following 664-residue polypeptide: DNA ligase (664 aa).

Residues 32 to 36 (DKEYD) and 80 to 81 (SL) each bind NAD(+). Residue lysine 122 is the N6-AMP-lysine intermediate of the active site. NAD(+) contacts are provided by arginine 144, glutamate 178, and lysine 314. Zn(2+) contacts are provided by cysteine 407, cysteine 410, cysteine 423, and cysteine 429. Residues 587–664 (IDENPFMDKT…NEEEFSNKIK (78 aa)) form the BRCT domain.

Belongs to the NAD-dependent DNA ligase family. LigA subfamily. Mg(2+) serves as cofactor. The cofactor is Mn(2+).

It catalyses the reaction NAD(+) + (deoxyribonucleotide)n-3'-hydroxyl + 5'-phospho-(deoxyribonucleotide)m = (deoxyribonucleotide)n+m + AMP + beta-nicotinamide D-nucleotide.. In terms of biological role, DNA ligase that catalyzes the formation of phosphodiester linkages between 5'-phosphoryl and 3'-hydroxyl groups in double-stranded DNA using NAD as a coenzyme and as the energy source for the reaction. It is essential for DNA replication and repair of damaged DNA. This chain is DNA ligase, found in Clostridium botulinum (strain Loch Maree / Type A3).